We begin with the raw amino-acid sequence, 504 residues long: Xylose import ATP-binding protein XylG (504 aa).

ABC transporter domains follow at residues 6 to 243 (LEMK…VGRE) and 260 to 504 (LKVD…TGGK). 38–45 (GENGAGKS) provides a ligand contact to ATP.

Belongs to the ABC transporter superfamily. Xylose importer (TC 3.A.1.2.4) family. In terms of assembly, the complex is composed of two ATP-binding proteins (XylG), two transmembrane proteins (XylH) and a solute-binding protein (XylF).

The protein resides in the cell membrane. The enzyme catalyses D-xylose(out) + ATP + H2O = D-xylose(in) + ADP + phosphate + H(+). Its function is as follows. Part of the ABC transporter complex XylFGH involved in xylose import. Responsible for energy coupling to the transport system. This Geobacillus kaustophilus (strain HTA426) protein is Xylose import ATP-binding protein XylG.